A 1119-amino-acid chain; its full sequence is uncharacterized protein (1119 aa).

An N-terminal signal peptide occupies residues 1–21; sequence MNNIYISLYIFFISYIIQLCF. Residues 170-206 are a coiled coil; sequence NKKKLDKEKKKNVIELKEYLEDLKKRMFDMQKRLNDI. Disordered stretches follow at residues 606 to 627 and 782 to 905; these read NNNTNNTNNNSNNNNNNNIFNN and ASVQ…EHDE. The span at 788 to 891 shows a compositional bias: basic and acidic residues; it reads DKGEDNNDND…EKDKSRDDNK (104 aa). Residues 890–920 are a coiled coil; the sequence is NKAQNNNSTDNEEHDEITEQIGFLKNHNQKY.

This is an uncharacterized protein from Plasmodium falciparum (isolate 3D7).